Reading from the N-terminus, the 375-residue chain is Isopentenyl-diphosphate delta-isomerase (375 aa).

8 to 9 (RK) is a binding site for substrate. FMN is bound by residues Thr-65, 66 to 68 (GMT), Ser-96, and Asn-125. A substrate-binding site is contributed by 96–98 (SQR). Residue Gln-160 coordinates substrate. Glu-161 provides a ligand contact to Mg(2+). FMN contacts are provided by residues Lys-192, Thr-222, 273-275 (GVR), and 294-295 (AL).

This sequence belongs to the IPP isomerase type 2 family. As to quaternary structure, homooctamer. Dimer of tetramers. Requires FMN as cofactor. NADPH is required as a cofactor. The cofactor is Mg(2+).

It localises to the cytoplasm. The enzyme catalyses isopentenyl diphosphate = dimethylallyl diphosphate. Involved in the biosynthesis of isoprenoids. Catalyzes the 1,3-allylic rearrangement of the homoallylic substrate isopentenyl (IPP) to its allylic isomer, dimethylallyl diphosphate (DMAPP). This is Isopentenyl-diphosphate delta-isomerase from Aeropyrum pernix (strain ATCC 700893 / DSM 11879 / JCM 9820 / NBRC 100138 / K1).